The sequence spans 399 residues: Glycerol-1-phosphate dehydrogenase [NAD(P)+] (399 aa).

Residues aspartate 56, 118-122 (GTIHD), and 140-143 (TAPS) each bind NAD(+). Aspartate 145 serves as a coordination point for substrate. Residue serine 149 participates in NAD(+) binding. Aspartate 192 provides a ligand contact to substrate. Residues aspartate 192 and histidine 272 each contribute to the Ni(2+) site. Histidine 276 provides a ligand contact to substrate. Histidine 292 lines the Ni(2+) pocket.

This sequence belongs to the glycerol-1-phosphate dehydrogenase family. Homodimer. Ni(2+) serves as cofactor.

It localises to the cytoplasm. The enzyme catalyses sn-glycerol 1-phosphate + NAD(+) = dihydroxyacetone phosphate + NADH + H(+). It carries out the reaction sn-glycerol 1-phosphate + NADP(+) = dihydroxyacetone phosphate + NADPH + H(+). Its function is as follows. Catalyzes the NAD(P)H-dependent reduction of dihydroxyacetonephosphate (DHAP or glycerone phosphate) to glycerol 1-phosphate (G1P). The G1P thus generated is probably used for the synthesis of phosphoglycerolipids in Gram-positive bacterial species. The sequence is that of Glycerol-1-phosphate dehydrogenase [NAD(P)+] from Halalkalibacterium halodurans (strain ATCC BAA-125 / DSM 18197 / FERM 7344 / JCM 9153 / C-125) (Bacillus halodurans).